The chain runs to 185 residues: dTTP/UTP pyrophosphatase (185 aa).

D64 functions as the Proton acceptor in the catalytic mechanism.

The protein belongs to the Maf family. YhdE subfamily. Requires a divalent metal cation as cofactor.

The protein localises to the cytoplasm. The catalysed reaction is dTTP + H2O = dTMP + diphosphate + H(+). It catalyses the reaction UTP + H2O = UMP + diphosphate + H(+). In terms of biological role, nucleoside triphosphate pyrophosphatase that hydrolyzes dTTP and UTP. May have a dual role in cell division arrest and in preventing the incorporation of modified nucleotides into cellular nucleic acids. This Thermococcus gammatolerans (strain DSM 15229 / JCM 11827 / EJ3) protein is dTTP/UTP pyrophosphatase.